Here is a 370-residue protein sequence, read N- to C-terminus: uncharacterized protein (370 aa).

Transmembrane regions (helical) follow at residues 6–26 (AVVF…CLGN), 49–69 (IGIV…VAPF), 79–99 (SFAN…GEMA), 111–131 (FLGT…LGII), 143–163 (ILIG…CAGF), 167–187 (MIGK…FGLW), 206–226 (MVAI…IVLI), 236–256 (IQTT…TAFI), 307–327 (VAFA…VAGM), and 333–353 (AAMI…AAWM).

It belongs to the EutH family.

The protein resides in the cell membrane. This is an uncharacterized protein from Bacillus subtilis (strain 168).